The chain runs to 268 residues: Protein MGF 300-1L (268 aa).

Residues 1-175 lie on the Cytoplasmic side of the membrane; it reads MVSLTTCCLK…QTFKIFYAKN (175 aa). A helical membrane pass occupies residues 176–193; that stretch reads YSLSTLYCIFLAIYYKRY. The Extracellular segment spans residues 194-268; that stretch reads TALRKMVKIY…MYAFSQNNFW (75 aa).

Belongs to the asfivirus MGF 300 family.

It is found in the host membrane. Functionally, plays a role in virus cell tropism, and may be required for efficient virus replication in macrophages. The polypeptide is Protein MGF 300-1L (African swine fever virus (isolate Tick/South Africa/Pretoriuskop Pr4/1996) (ASFV)).